Here is a 256-residue protein sequence, read N- to C-terminus: Imidazole glycerol phosphate synthase subunit HisF (256 aa).

Active-site residues include Asp12 and Asp131.

It belongs to the HisA/HisF family. Heterodimer of HisH and HisF.

Its subcellular location is the cytoplasm. The catalysed reaction is 5-[(5-phospho-1-deoxy-D-ribulos-1-ylimino)methylamino]-1-(5-phospho-beta-D-ribosyl)imidazole-4-carboxamide + L-glutamine = D-erythro-1-(imidazol-4-yl)glycerol 3-phosphate + 5-amino-1-(5-phospho-beta-D-ribosyl)imidazole-4-carboxamide + L-glutamate + H(+). It functions in the pathway amino-acid biosynthesis; L-histidine biosynthesis; L-histidine from 5-phospho-alpha-D-ribose 1-diphosphate: step 5/9. In terms of biological role, IGPS catalyzes the conversion of PRFAR and glutamine to IGP, AICAR and glutamate. The HisF subunit catalyzes the cyclization activity that produces IGP and AICAR from PRFAR using the ammonia provided by the HisH subunit. This Ectopseudomonas mendocina (strain ymp) (Pseudomonas mendocina) protein is Imidazole glycerol phosphate synthase subunit HisF.